Consider the following 622-residue polypeptide: Phosphomethylpyrimidine synthase (622 aa).

Substrate-binding positions include N226, M255, Y284, H320, 340–342 (SRG), 381–384 (DGLR), and E420. H424 serves as a coordination point for Zn(2+). Y447 is a binding site for substrate. Residue H488 participates in Zn(2+) binding. 3 residues coordinate [4Fe-4S] cluster: C568, C571, and C576.

This sequence belongs to the ThiC family. In terms of assembly, homodimer. [4Fe-4S] cluster is required as a cofactor.

The enzyme catalyses 5-amino-1-(5-phospho-beta-D-ribosyl)imidazole + S-adenosyl-L-methionine = 4-amino-2-methyl-5-(phosphooxymethyl)pyrimidine + CO + 5'-deoxyadenosine + formate + L-methionine + 3 H(+). It functions in the pathway cofactor biosynthesis; thiamine diphosphate biosynthesis. Its function is as follows. Catalyzes the synthesis of the hydroxymethylpyrimidine phosphate (HMP-P) moiety of thiamine from aminoimidazole ribotide (AIR) in a radical S-adenosyl-L-methionine (SAM)-dependent reaction. The polypeptide is Phosphomethylpyrimidine synthase (Ruthia magnifica subsp. Calyptogena magnifica).